Consider the following 450-residue polypeptide: UDP-N-acetylmuramoylalanine--D-glutamate ligase (450 aa).

Residue 119 to 125 (GSNGKTT) coordinates ATP.

Belongs to the MurCDEF family.

It is found in the cytoplasm. It catalyses the reaction UDP-N-acetyl-alpha-D-muramoyl-L-alanine + D-glutamate + ATP = UDP-N-acetyl-alpha-D-muramoyl-L-alanyl-D-glutamate + ADP + phosphate + H(+). The protein operates within cell wall biogenesis; peptidoglycan biosynthesis. Cell wall formation. Catalyzes the addition of glutamate to the nucleotide precursor UDP-N-acetylmuramoyl-L-alanine (UMA). This chain is UDP-N-acetylmuramoylalanine--D-glutamate ligase, found in Streptococcus thermophilus (strain ATCC BAA-491 / LMD-9).